Consider the following 716-residue polypeptide: Splicing factor Cactin (716 aa).

Residues 1-104 form a disordered region; the sequence is MGSHGKGKRD…SKKAQKKALR (104 aa). The span at 10–22 shows a compositional bias: basic and acidic residues; it reads DRSGRQKKRRDES. Residues 25-45 show a composition bias toward low complexity; it reads GSESESYTSDSDGSDDLSPPR. Over residues 46–61 the composition is skewed to basic residues; the sequence is SSRRKKGSSSRRTRRR. Basic and acidic residues predominate over residues 81-95; it reads SSKDYSEEKVTEYMS. Residues 153–201 adopt a coiled-coil conformation; that stretch reads SVKAEKRRHRERMTEVEKVKKRREERAVEKARHEEEMALLARERARAEF. S450 is subject to Phosphoserine. The disordered stretch occupies residues 466–525; that stretch reads VEENEEEINDTNLSDAEEAFSPEPVAEEEEADEAAEAAGSFSPELMHGDDREEAIDPEED. Over residues 468–500 the composition is skewed to acidic residues; sequence ENEEEINDTNLSDAEEAFSPEPVAEEEEADEAA.

The protein belongs to the CACTIN family. As to quaternary structure, interacts with At5g63440.

Its subcellular location is the nucleus speckle. Plays a role in pre-mRNA splicing by facilitating excision of a subset of introns. Required for embryogenesis. This chain is Splicing factor Cactin (CTN), found in Arabidopsis thaliana (Mouse-ear cress).